Here is a 421-residue protein sequence, read N- to C-terminus: Ameloblastin (421 aa).

The signal sequence occupies residues 1–26 (MPALKIPLFKMKDMVLILCLLKMSSA). Hydroxyproline is present on Pro-37. Residue Ser-43 is modified to Phosphoserine. Disordered regions lie at residues 104–126 (PVHPPPLPSQPSLQPQQPGQKPF), 264–311 (GGMP…ADPE), and 333–421 (GKIP…FQEP). A glycan (O-linked (GalNAc...) serine) is linked at Ser-112. Low complexity predominate over residues 113–125 (QPSLQPQQPGQKP). Residues 339-350 (ARGPAGRSRGPP) show a composition bias toward low complexity. Over residues 388–410 (MDSTATPYSEHTSMPGNKAQQPQ) the composition is skewed to polar residues. Basic and acidic residues predominate over residues 411–421 (IKRDAWRFQEP).

It belongs to the ameloblastin family. In terms of tissue distribution, ameloblast-specific. Located at the Tomes processes of secretory ameloblasts and in the sheath space between rod-interrod enamel.

It is found in the secreted. It localises to the extracellular space. Its subcellular location is the extracellular matrix. In terms of biological role, involved in the mineralization and structural organization of enamel. The chain is Ameloblastin (AMBN) from Sus scrofa (Pig).